The chain runs to 202 residues: Small ribosomal subunit protein uS4 (202 aa).

The interval 15–42 (LGDLPGLTRKAAKRSYPPGQHGQARRKR) is disordered. One can recognise an S4 RNA-binding domain in the interval 90-152 (SRLDNICFRL…KGSKQLAEGN (63 aa)).

It belongs to the universal ribosomal protein uS4 family. In terms of assembly, part of the 30S ribosomal subunit. Contacts protein S5. The interaction surface between S4 and S5 is involved in control of translational fidelity.

One of the primary rRNA binding proteins, it binds directly to 16S rRNA where it nucleates assembly of the body of the 30S subunit. Functionally, with S5 and S12 plays an important role in translational accuracy. The protein is Small ribosomal subunit protein uS4 of Synechococcus sp. (strain CC9902).